The following is a 367-amino-acid chain: Phosphoribosylaminoimidazole-succinocarboxamide synthase (367 aa).

This sequence belongs to the SAICAR synthetase family.

The enzyme catalyses 5-amino-1-(5-phospho-D-ribosyl)imidazole-4-carboxylate + L-aspartate + ATP = (2S)-2-[5-amino-1-(5-phospho-beta-D-ribosyl)imidazole-4-carboxamido]succinate + ADP + phosphate + 2 H(+). The protein operates within purine metabolism; IMP biosynthesis via de novo pathway; 5-amino-1-(5-phospho-D-ribosyl)imidazole-4-carboxamide from 5-amino-1-(5-phospho-D-ribosyl)imidazole-4-carboxylate: step 1/2. The protein is Phosphoribosylaminoimidazole-succinocarboxamide synthase of Vibrio atlanticus (strain LGP32) (Vibrio splendidus (strain Mel32)).